Consider the following 745-residue polypeptide: MVGEMTNNGRIRPSFPVKDLTSNEGSEYGGPVEFTREDVETLLHERIKYKSKYNYKERCENTMDYVKRLRLCIRWFQELELDYAFEQEKLKNAMEMNEKHCADLEVNLKVKEEELNMVIDELRKNFASVQVQLAKEQTEKLAANESLGKEREARIAVESLQAAITEELAKTQGELQTANQRIQAVNDMYKLLQEYNSSLQLYNSKLQGDLDEAHENIKRGEKERTGIVESIGNLKGQFKALQDQLAASKVSQDDVMKQKDELVNEIVSLKVEIQQVKDDRDRHITEIETLQAEATKQNDFKDTINELESKCSVQNKEIEELQDQLVASERKLQVADLSTFEKMNEFEEQKESIMELKGRLEEAELKLIEGEKLRKKLHNTIQELKGNIRVFCRVRPLLSGENSSEEAKTISYPTSLEALGRGIDLLQNGQSHCFTFDKVFVPSASQEDVFVEISQLVQSALDGYKVCIFAYGQTGSGKTYTMMGRPGNPDEKGLIPRCLEQIFQTRQSLRSQGWKYELQVSMLEIYNETIRDLLSTNKEAVRADNGVSPQKYAIKHDASGNTHVVELTVVDVRSSKQVSFLLDHAARNRSVGKTAMNEQSSRSHFVFTLKISGFNESTEQQVQGVLNLIDLAGSERLSKSGSTGDRLKETQAINKSLSSLGDVIFALAKKEDHVPFRNSKLTYLLQPCLGGDSKTLMFVNITPEPSSTGESLCSLRFAARVNACEIGTAHRHVNARPLDYRLSLG.

The disordered stretch occupies residues 1 to 31 (MVGEMTNNGRIRPSFPVKDLTSNEGSEYGGP). The interval 1–35 (MVGEMTNNGRIRPSFPVKDLTSNEGSEYGGPVEFT) is globular. Microtubule-binding stretches follow at residues 65 to 77 (YVKRLRLCIRWFQ) and 198 to 745 (SLQL…LSLG). 2 coiled-coil regions span residues 76 to 223 (FQEL…GEKE) and 259 to 389 (KDEL…GNIR). The region spanning 387–724 (NIRVFCRVRP…LRFAARVNAC (338 aa)) is the Kinesin motor domain. Position 472-479 (472-479 (GQTGSGKT)) interacts with ATP.

This sequence belongs to the TRAFAC class myosin-kinesin ATPase superfamily. Kinesin family. KIN-14 subfamily. Bind to microtubules in an ATP-insensitive manner (in vitro). Homodimer and heterodimer with KIN14N/KATC (in vitro).

It is found in the cytoplasm. Its subcellular location is the cytoskeleton. This Arabidopsis thaliana (Mouse-ear cress) protein is Kinesin-like protein KIN-14M.